The following is a 107-amino-acid chain: Nucleoid-associated protein Hhal_0231 (107 aa).

2 disordered regions span residues 1–24 and 82–107; these read MKGGLGNIMKQAQKMQEDMQKAQE and VQRESQERMSGMAEGMGLPPGMKLPF. The span at 15-24 shows a compositional bias: basic and acidic residues; sequence MQEDMQKAQE.

The protein belongs to the YbaB/EbfC family. Homodimer.

It is found in the cytoplasm. Its subcellular location is the nucleoid. Its function is as follows. Binds to DNA and alters its conformation. May be involved in regulation of gene expression, nucleoid organization and DNA protection. The polypeptide is Nucleoid-associated protein Hhal_0231 (Halorhodospira halophila (strain DSM 244 / SL1) (Ectothiorhodospira halophila (strain DSM 244 / SL1))).